A 208-amino-acid chain; its full sequence is Receptor expression-enhancing protein 6 (208 aa).

A run of 3 helical transmembrane segments spans residues 49 to 69, 93 to 113, and 115 to 135; these read GAFLLLGYGASLICNLIGFVY, WVIYGFFSVGEFFSDIFLHWF, and FYYVCKCLFLLWCMAPVSWNG. The interval 187–208 is disordered; the sequence is VGPAESEPRSLPSSAHTEPTVD. Residues 197 to 208 show a composition bias toward polar residues; it reads LPSSAHTEPTVD.

This sequence belongs to the DP1 family.

The protein localises to the endoplasmic reticulum membrane. It localises to the cytoplasmic vesicle. The protein resides in the clathrin-coated vesicle membrane. Required correct function and survival of retinal photoreceptors. Required for retinal development. In rod photoreceptors, facilitates stability and/or trafficking of guanylate cyclases and is required to maintain endoplasmic reticulum and mitochondrial homeostasis. May play a role in clathrin-coated intracellular vesicle trafficking of proteins from the endoplasmic reticulum to the retinal rod plasma membrane. This Danio rerio (Zebrafish) protein is Receptor expression-enhancing protein 6.